The chain runs to 369 residues: MQHAAVCSGTSRHRRTTVTIEKPPATSAPIVEMKDVRRMFGETAAINGVSLSVARGEILGIIGRSGAGKSTLIRCVNGLEKPDTGSIHIEGREITSLDEDALRPVRRRIGMVFQHFNLLSAKTAAQNIALPLKIAGMPKAERIKRVAELLELVGLSDKASHYPAQLSGGQKQRVGIARALAAEPAVLLSDEATSALDPETTQSILALLKDINAKLGLTILLITHEMDVIRRIADRVIVLDHGLIAEEGPVWKVFANPQSPVTQSMLQVLTPELPAIWRNRLEKKGDQAILRVKLSGMAAKGAFFNDVAAATSLAPQLIHGGMDTIQGEPVGTLFIGLPAEDKTKLKAAIGYLNTHADATEVLGYVSGNA.

Residues 31–266 (VEMKDVRRMF…PQSPVTQSML (236 aa)) form the ABC transporter domain. Residue 63–70 (GRSGAGKS) participates in ATP binding.

This sequence belongs to the ABC transporter superfamily. Methionine importer (TC 3.A.1.24) family. In terms of assembly, the complex is composed of two ATP-binding proteins (MetN), two transmembrane proteins (MetI) and a solute-binding protein (MetQ).

It localises to the cell inner membrane. It catalyses the reaction L-methionine(out) + ATP + H2O = L-methionine(in) + ADP + phosphate + H(+). The enzyme catalyses D-methionine(out) + ATP + H2O = D-methionine(in) + ADP + phosphate + H(+). Its function is as follows. Part of the ABC transporter complex MetNIQ involved in methionine import. Responsible for energy coupling to the transport system. The chain is Methionine import ATP-binding protein MetN from Brucella abortus (strain 2308).